Consider the following 1007-residue polypeptide: Glutamate receptor ionotropic, delta-2 (1007 aa).

The N-terminal stretch at 1–23 (MEVFPLLLFLSFCWSRTWDLATA) is a signal peptide. Residues 24 to 345 (DSIIHIGAIF…NAFHKKLEDR (322 aa)) form an interaction with CBLN1 homotrimer region. Topologically, residues 24 to 566 (DSIIHIGAIF…DMFACLAPFD (543 aa)) are extracellular. 3 disulfide bridges follow: Cys-83–Cys-355, Cys-99–Cys-131, and Cys-298–Cys-310. Asn-293 carries an N-linked (GlcNAc...) asparagine glycan. A glycan (N-linked (GlcNAc...) asparagine) is linked at Asn-426. Glu-531, Val-534, and Asp-535 together coordinate Ca(2+). The chain crosses the membrane as a helical span at residues 567-587 (LSLWACIAGTVLLVGLLVYLL). Topologically, residues 588-635 (NWLNPPRLQMGSMTSTTLYNSMWFVYGSFVQQGGEVPYTTLATRMMMG) are cytoplasmic. Residues 636–656 (AWWLFALIVISSYTANLAAFL) form a helical membrane-spanning segment. Residues 657 to 830 (TITRIESSIQ…QKGGALDIKS (174 aa)) lie on the Extracellular side of the membrane. Residues Asn-713 and Asn-716 are each glycosylated (N-linked (GlcNAc...) asparagine). Ca(2+) is bound by residues Asp-753, Asp-755, and Ser-757. A helical transmembrane segment spans residues 831-851 (LAGVFCILAAGIVLSCLIAVL). The Cytoplasmic portion of the chain corresponds to 852–1007 (ETWWSRRKGS…GNDPDRGTSI (156 aa)). Ser-883 is subject to Phosphoserine. Thr-886 carries the post-translational modification Phosphothreonine. Residue Ser-890 is modified to Phosphoserine. The interval 921 to 991 (DFRNTHITTT…MSSIPYQPTP (71 aa)) is interaction with AP4M1. Residues 1005–1007 (TSI) carry the PDZ-binding motif. At Ser-1006 the chain carries Phosphoserine.

This sequence belongs to the glutamate-gated ion channel (TC 1.A.10.1) family. GRID2 subfamily. In terms of assembly, tetramer; dimer of dimers. Interacts with EML2, MAGI2 (via PDZ domains) and AP4M1. Interacts with BECN1, GOPC, GRID2IP, SHANK1 and SHANK2. Interacts with CBLN2, but not with CBLN4. Interacts with CBLN1 (via C1q domain); the interaction is CBLN1-NRX1 complex formation-dependent; CBLN1-binding is calcium-independent; CBLN1 hexamers anchor GRID2 N-terminal domain dimers to monomeric NRXN1 isoform beta; promotes synaptogenesis and mediates the D-Serine-dependent long term depression signals and AMPA receptor endocytosis. Expressed selectively in cerebellar Purkinje cells where it is localized in dendritic spines.

Its subcellular location is the postsynaptic cell membrane. It catalyses the reaction Ca(2+)(in) = Ca(2+)(out). The enzyme catalyses Na(+)(in) = Na(+)(out). Its function is as follows. Member of the ionotropic glutamate receptor family, which plays a crucial role in synaptic organization and signal transduction in the central nervous system. Although it shares structural features with ionotropic glutamate receptors, does not bind glutamate as a primary ligand. Promotes synaptogenesis and mediates the D-Serine-dependent long term depression signals and AMPA receptor endocytosis of cerebellar parallel fiber-Purkinje cell (PF-PC) synapses through the NRX1B-CBLN1-GRID2 triad complex. In the presence of neurexins and cerebellins, forms cation-selective channels that are proposed to be gated by glycine and D-serine. However, recent research disputes this ligand-gated cation channel activity. Cation-selective ion channel activity can be triggered by GRM1 in Purkinje cells. The protein is Glutamate receptor ionotropic, delta-2 (Grid2) of Mus musculus (Mouse).